A 502-amino-acid polypeptide reads, in one-letter code: Type II secretion system protein E (502 aa).

An ATP-binding site is contributed by 263–270; the sequence is GPTGSGKT. Residues C396, C399, C429, and C432 each contribute to the Zn(2+) site. Residues 461–480 form a disordered region; that stretch reads SSEQEMTRHARTSGPSIRDD.

This sequence belongs to the GSP E family. Homodimer. Dimerization is directed by a relatively short domain near the extreme N-terminus and is essential for extracellular protein secretion. May form homooligomers. Interacts with XcpY/GspL. Forms an inner membrane platform subcomplex with XcpS/GspF, XcpY/GspL and XcpZ/GspM. Zn(2+) serves as cofactor.

It is found in the cell inner membrane. It catalyses the reaction ATP + H2O + cellular proteinSide 1 = ADP + phosphate + cellular proteinSide 2.. Its function is as follows. ATPase component of the type II secretion system required for the energy-dependent secretion of extracellular factors such as proteases and toxins from the periplasm. Acts as a molecular motor to provide the energy that is required for assembly of the pseudopilus and the extrusion of substrates generated in the cytoplasm. This Pseudomonas aeruginosa (strain ATCC 15692 / DSM 22644 / CIP 104116 / JCM 14847 / LMG 12228 / 1C / PRS 101 / PAO1) protein is Type II secretion system protein E (xcpR).